Consider the following 360-residue polypeptide: Dihydroorotate dehydrogenase (quinone) (360 aa).

Residues 66–70 (AGFDK) and Thr-90 each bind FMN. Lys-70 contributes to the substrate binding site. 115 to 119 (NRMGF) provides a ligand contact to substrate. FMN-binding residues include Asn-143 and Asn-176. Residue Asn-176 participates in substrate binding. Ser-179 acts as the Nucleophile in catalysis. Asn-181 serves as a coordination point for substrate. The FMN site is built by Lys-212 and Thr-240. 241–242 (NT) contacts substrate. Residues Gly-264, Gly-293, and 314–315 (YT) each bind FMN.

It belongs to the dihydroorotate dehydrogenase family. Type 2 subfamily. As to quaternary structure, monomer. FMN is required as a cofactor.

It localises to the cell membrane. It catalyses the reaction (S)-dihydroorotate + a quinone = orotate + a quinol. The protein operates within pyrimidine metabolism; UMP biosynthesis via de novo pathway; orotate from (S)-dihydroorotate (quinone route): step 1/1. Catalyzes the conversion of dihydroorotate to orotate with quinone as electron acceptor. The protein is Dihydroorotate dehydrogenase (quinone) of Mycobacterium marinum (strain ATCC BAA-535 / M).